The following is an 86-amino-acid chain: Small ribosomal subunit protein uS17 (86 aa).

Belongs to the universal ribosomal protein uS17 family. Part of the 30S ribosomal subunit.

One of the primary rRNA binding proteins, it binds specifically to the 5'-end of 16S ribosomal RNA. The protein is Small ribosomal subunit protein uS17 of Marinomonas sp. (strain MWYL1).